A 418-amino-acid polypeptide reads, in one-letter code: tRNA-2-methylthio-N(6)-dimethylallyladenosine synthase (418 aa).

Residues 2–118 (PGYYLWTIGC…WREIPEGFIL (117 aa)) form the MTTase N-terminal domain. Residues Cys11, Cys47, Cys81, Cys134, Cys138, and Cys141 each contribute to the [4Fe-4S] cluster site. The region spanning 120–351 (LRPPVSANVT…EDLQKETVGK (232 aa)) is the Radical SAM core domain. A TRAM domain is found at 346–414 (KETVGKANAA…PWSLQAKLVN (69 aa)).

It belongs to the methylthiotransferase family. MiaB subfamily. As to quaternary structure, monomer. [4Fe-4S] cluster serves as cofactor.

It localises to the cytoplasm. It catalyses the reaction N(6)-dimethylallyladenosine(37) in tRNA + (sulfur carrier)-SH + AH2 + 2 S-adenosyl-L-methionine = 2-methylsulfanyl-N(6)-dimethylallyladenosine(37) in tRNA + (sulfur carrier)-H + 5'-deoxyadenosine + L-methionine + A + S-adenosyl-L-homocysteine + 2 H(+). Functionally, catalyzes the methylthiolation of N6-(dimethylallyl)adenosine (i(6)A), leading to the formation of 2-methylthio-N6-(dimethylallyl)adenosine (ms(2)i(6)A) at position 37 in tRNAs that read codons beginning with uridine. This is tRNA-2-methylthio-N(6)-dimethylallyladenosine synthase from Dehalococcoides mccartyi (strain CBDB1).